The chain runs to 211 residues: SAGA-associated factor 11 homolog (211 aa).

The segment at 115 to 136 (CTCPHCDRLVAAARFAPHLEKC) adopts an SGF11-type zinc-finger fold. A disordered region spans residues 153–211 (TKEGASASSSSTSTYIQSGGNTGGTDDEDDVDWSSDKRKKKSTQNSRNNGSKKNNGKIF). The span at 157-166 (ASASSSSTST) shows a compositional bias: low complexity. S187 bears the Phosphoserine mark. Residues 197–211 (NSRNNGSKKNNGKIF) are compositionally biased toward low complexity.

It belongs to the SGF11 family. As to quaternary structure, component of some SAGA transcription coactivator-HAT complexes, at least composed of Ada2b, not/nonstop, Pcaf/Gcn5, Sgf11 and Spt3. Within the SAGA complex, Sgf11, e(y)2, and not/nonstop form an additional subcomplex of SAGA called the DUB module (deubiquitination module). Interacts directly with not/nonstop. Interacts with the AMEX complex component xmas-2. Interacts with Cbp80; important for promoter recruitment of Sgf11 that is not associated with the DUB module.

It is found in the nucleus. It localises to the nucleoplasm. The protein resides in the cytoplasm. Component of the transcription regulatory histone acetylation (HAT) complex SAGA, a multiprotein complex that activates transcription by remodeling chromatin and mediating histone acetylation and deubiquitination. Within the SAGA complex, participates in a subcomplex that specifically deubiquitinates histone H2B. The SAGA complex is recruited to specific gene promoters by activators, where it is required for transcription. Required for nuclear receptor-mediated transactivation. Binds independently on SAGA to promoters in an RNA-dependent manner. Binds to mRNA and is essential for total mRNA export from the nucleus. Required to counteract heterochromatin silencing. Controls the development of neuronal connectivity in visual system by being required for accurate axon targeting in the optic lobe. Required for expression of ecdysone-induced genes such as br/broad. In Drosophila mojavensis (Fruit fly), this protein is SAGA-associated factor 11 homolog.